A 283-amino-acid polypeptide reads, in one-letter code: 2-dehydro-3-deoxyphosphooctonate aldolase (283 aa).

The protein belongs to the KdsA family.

The protein resides in the cytoplasm. It catalyses the reaction D-arabinose 5-phosphate + phosphoenolpyruvate + H2O = 3-deoxy-alpha-D-manno-2-octulosonate-8-phosphate + phosphate. It functions in the pathway carbohydrate biosynthesis; 3-deoxy-D-manno-octulosonate biosynthesis; 3-deoxy-D-manno-octulosonate from D-ribulose 5-phosphate: step 2/3. The protein operates within bacterial outer membrane biogenesis; lipopolysaccharide biosynthesis. This is 2-dehydro-3-deoxyphosphooctonate aldolase from Vibrio cholerae serotype O1 (strain ATCC 39315 / El Tor Inaba N16961).